A 382-amino-acid polypeptide reads, in one-letter code: Anhydro-N-acetylmuramic acid kinase (382 aa).

22-29 (GTSMDGVD) is an ATP binding site.

The protein belongs to the anhydro-N-acetylmuramic acid kinase family.

It catalyses the reaction 1,6-anhydro-N-acetyl-beta-muramate + ATP + H2O = N-acetyl-D-muramate 6-phosphate + ADP + H(+). It participates in amino-sugar metabolism; 1,6-anhydro-N-acetylmuramate degradation. Its pathway is cell wall biogenesis; peptidoglycan recycling. Catalyzes the specific phosphorylation of 1,6-anhydro-N-acetylmuramic acid (anhMurNAc) with the simultaneous cleavage of the 1,6-anhydro ring, generating MurNAc-6-P. Is required for the utilization of anhMurNAc either imported from the medium or derived from its own cell wall murein, and thus plays a role in cell wall recycling. The protein is Anhydro-N-acetylmuramic acid kinase of Burkholderia orbicola (strain AU 1054).